The chain runs to 217 residues: Salivary glue protein Sgs-3 (217 aa).

The N-terminal stretch at 1–23 (MKLTIATVLASILLIGFANVANC) is a signal peptide. The segment covering 45-130 (KSTSTTTTTT…KPTTHSTPKT (86 aa)) has biased composition (low complexity). Residues 45–163 (KSTSTTTTTT…KHTTPTTTTT (119 aa)) are disordered. Residues 131-154 (KPTKHTTPKTKPTKHTTPKTKPTK) show a composition bias toward basic residues.

The polypeptide is Salivary glue protein Sgs-3 (Sgs3) (Drosophila simulans (Fruit fly)).